The chain runs to 579 residues: Moesin a (579 aa).

The 291-residue stretch at 5-295 folds into the FERM domain; that stretch reads ISVRVTTMDA…GNHELYMRRR (291 aa). The stretch at 306-448 forms a coiled coil; sequence KAQAKEEKNH…EDEALEWQTK (143 aa). Disordered regions lie at residues 308–341, 376–418, and 464–519; these read QAKE…EKIE, EQER…EHLA, and KNKV…KNER. The segment covering 376-400 has biased composition (basic and acidic residues); sequence EQERKRAQEEAERLERERRLAEEAK. Low complexity predominate over residues 490–501; sequence AEASAELTSAAA. A compositionally biased stretch (basic and acidic residues) spans 502–519; that stretch reads YKDRSEEERMTEAEKNER. Residues 517–551 adopt a coiled-coil conformation; the sequence is NERVQKHLLALTSELANARDETKKTQNDIIHAENV.

It is found in the cell membrane. Its subcellular location is the cell junction. Functionally, positively regulates endothelial adherens junction formation and stabilization. Is thereby required for intersegmental vessel luminal membrane formation and stabilization during tubulogenesis in the early stages of development, independent of blood flow dynamics. The chain is Moesin a from Danio rerio (Zebrafish).